A 359-amino-acid polypeptide reads, in one-letter code: Peptide chain release factor 1 (359 aa).

Position 236 is an N5-methylglutamine (Gln236).

Belongs to the prokaryotic/mitochondrial release factor family. Post-translationally, methylated by PrmC. Methylation increases the termination efficiency of RF1.

The protein resides in the cytoplasm. In terms of biological role, peptide chain release factor 1 directs the termination of translation in response to the peptide chain termination codons UAG and UAA. This Ureaplasma parvum serovar 3 (strain ATCC 27815 / 27 / NCTC 11736) protein is Peptide chain release factor 1.